We begin with the raw amino-acid sequence, 568 residues long: CTP synthase (568 aa).

The tract at residues 1-276 (MPQARTIKHV…DAYLVRRLGL (276 aa)) is amidoligase domain. Serine 18 contributes to the CTP binding site. Residue serine 18 participates in UTP binding. Residues 19–24 (SLGKGL) and aspartate 76 each bind ATP. The Mg(2+) site is built by aspartate 76 and glutamate 150. CTP is bound by residues 157 to 159 (DIE), 197 to 202 (KTKPTQ), and lysine 233. Residues 197-202 (KTKPTQ) and lysine 233 contribute to the UTP site. Residues 301 to 550 (RIALVGKYVD…VNAALEYRAA (250 aa)) enclose the Glutamine amidotransferase type-1 domain. Position 364 (glycine 364) interacts with L-glutamine. Cysteine 391 (nucleophile; for glutamine hydrolysis) is an active-site residue. L-glutamine-binding positions include 392-395 (LGLQ), glutamate 415, and arginine 476. Residues histidine 523 and glutamate 525 contribute to the active site.

Belongs to the CTP synthase family. As to quaternary structure, homotetramer.

The enzyme catalyses UTP + L-glutamine + ATP + H2O = CTP + L-glutamate + ADP + phosphate + 2 H(+). It catalyses the reaction L-glutamine + H2O = L-glutamate + NH4(+). It carries out the reaction UTP + NH4(+) + ATP = CTP + ADP + phosphate + 2 H(+). It functions in the pathway pyrimidine metabolism; CTP biosynthesis via de novo pathway; CTP from UDP: step 2/2. With respect to regulation, allosterically activated by GTP, when glutamine is the substrate; GTP has no effect on the reaction when ammonia is the substrate. The allosteric effector GTP functions by stabilizing the protein conformation that binds the tetrahedral intermediate(s) formed during glutamine hydrolysis. Inhibited by the product CTP, via allosteric rather than competitive inhibition. In terms of biological role, catalyzes the ATP-dependent amination of UTP to CTP with either L-glutamine or ammonia as the source of nitrogen. Regulates intracellular CTP levels through interactions with the four ribonucleotide triphosphates. This chain is CTP synthase, found in Saccharopolyspora erythraea (strain ATCC 11635 / DSM 40517 / JCM 4748 / NBRC 13426 / NCIMB 8594 / NRRL 2338).